A 98-amino-acid polypeptide reads, in one-letter code: Beta-elicitin cinnamomin (98 aa).

3 cysteine pairs are disulfide-bonded: Cys-3/Cys-71, Cys-27/Cys-56, and Cys-51/Cys-95. The Beak-like motif 1 (ligand binding) motif lies at 33–42 (YSMLTATALP). The Beak-like motif 2 (ligand binding) signature appears at 72–83 (DLTVPTSGLVLD).

Belongs to the elicitin family.

Its subcellular location is the secreted. Its function is as follows. Induces local and distal defense responses (incompatible hypersensitive reaction) in plants from the solanaceae and cruciferae families. Elicits leaf necrosis and causes the accumulation of pathogenesis-related proteins. Might interact with the lipidic molecules of the plasma membrane. Elicitins are able to load, carry, and transfer sterols between membranes. The sequence is that of Beta-elicitin cinnamomin from Phytophthora cinnamomi (Cinnamon fungus).